We begin with the raw amino-acid sequence, 265 residues long: MSDFLSTILEEKKREVEQRKRTISEEFLEERSASAMERRSLCRALATPGRRGINIIAEVKRGSPSRGVMNPGLDAAQFARRYESCGAAAVSVLTDAGFFHGKAGDLRSARAAVKIPVLRKDFIVSRYQIFESAVMGADAVLLIVRAISPELLGECLRLCRRIGLDALVEVHSAEELDAASEAGAVLIGMNNRDLSTFTTDIRTSIQLVRRMRPGQVAVSESGIRCREQIDRLLDAGIWNFLIGESLVTAPEPEAVLAHLFGAYAA.

The protein belongs to the TrpC family.

It carries out the reaction 1-(2-carboxyphenylamino)-1-deoxy-D-ribulose 5-phosphate + H(+) = (1S,2R)-1-C-(indol-3-yl)glycerol 3-phosphate + CO2 + H2O. Its pathway is amino-acid biosynthesis; L-tryptophan biosynthesis; L-tryptophan from chorismate: step 4/5. The protein is Indole-3-glycerol phosphate synthase of Syntrophobacter fumaroxidans (strain DSM 10017 / MPOB).